Here is a 430-residue protein sequence, read N- to C-terminus: Adenylosuccinate synthetase (430 aa).

Residues 12–18 (GDEGKGK) and 40–42 (GHT) each bind GTP. Asp13 functions as the Proton acceptor in the catalytic mechanism. Positions 13 and 40 each coordinate Mg(2+). IMP-binding positions include 13 to 16 (DEGK), 38 to 41 (NAGH), Thr130, Arg144, Gln224, Thr239, and Arg303. The active-site Proton donor is the His41. Position 299 to 305 (299 to 305 (TNTGRPR)) interacts with substrate. GTP is bound by residues Arg305, 331–333 (KLD), and 413–415 (STS).

It belongs to the adenylosuccinate synthetase family. In terms of assembly, homodimer. Requires Mg(2+) as cofactor.

It is found in the cytoplasm. It catalyses the reaction IMP + L-aspartate + GTP = N(6)-(1,2-dicarboxyethyl)-AMP + GDP + phosphate + 2 H(+). The protein operates within purine metabolism; AMP biosynthesis via de novo pathway; AMP from IMP: step 1/2. Functionally, plays an important role in the de novo pathway of purine nucleotide biosynthesis. Catalyzes the first committed step in the biosynthesis of AMP from IMP. The polypeptide is Adenylosuccinate synthetase (Rhodopseudomonas palustris (strain BisB5)).